We begin with the raw amino-acid sequence, 285 residues long: Tropomyosin-2 (285 aa).

Residues 1 to 277 are a coiled coil; the sequence is MDAIKKKMQA…KDIGDDLDTA (277 aa). Residues 103-133 are disordered; it reads EERLATATAKLSEASQAADESERARKVLENR. Positions 122–133 are enriched in basic and acidic residues; it reads ESERARKVLENR.

The protein belongs to the tropomyosin family. In terms of assembly, homodimer.

Functionally, tropomyosin, in association with the troponin complex, plays a central role in the calcium dependent regulation of muscle contraction. In Bombyx mori (Silk moth), this protein is Tropomyosin-2.